Here is a 213-residue protein sequence, read N- to C-terminus: Octanoyltransferase (213 aa).

One can recognise a BPL/LPL catalytic domain in the interval 28–203 (GTSPETLLLL…RFPFLLDERL (176 aa)). Substrate contacts are provided by residues 66–73 (RGGDVTFH), 133–135 (SIG), and 146–148 (GFA). Catalysis depends on cysteine 164, which acts as the Acyl-thioester intermediate.

This sequence belongs to the LipB family.

The protein localises to the cytoplasm. The catalysed reaction is octanoyl-[ACP] + L-lysyl-[protein] = N(6)-octanoyl-L-lysyl-[protein] + holo-[ACP] + H(+). The protein operates within protein modification; protein lipoylation via endogenous pathway; protein N(6)-(lipoyl)lysine from octanoyl-[acyl-carrier-protein]: step 1/2. Functionally, catalyzes the transfer of endogenously produced octanoic acid from octanoyl-acyl-carrier-protein onto the lipoyl domains of lipoate-dependent enzymes. Lipoyl-ACP can also act as a substrate although octanoyl-ACP is likely to be the physiological substrate. The polypeptide is Octanoyltransferase (Geobacter metallireducens (strain ATCC 53774 / DSM 7210 / GS-15)).